The sequence spans 89 residues: Progonadoliberin-1 (89 aa).

A signal peptide spans 1–23 (MKAFPTFALLFLVLLFSAHVSDA). Gln-24 bears the Pyrrolidone carboxylic acid mark. Glycine amide is present on Gly-33.

Belongs to the GnRH family. In terms of tissue distribution, expressed in the forebrain from larval stages.

It is found in the secreted. Functionally, stimulates the secretion of gonadotropins. This is Progonadoliberin-1 (gnrh1) from Xenopus laevis (African clawed frog).